The chain runs to 785 residues: Cadherin-7 (785 aa).

A signal peptide spans 1–27; it reads MKLGKVEFCHLLQIIALFLCLSGMNQA. Positions 28 to 47 are excised as a propeptide; that stretch reads EPSRSRSKPYFQSGRTRTKR. Residues 48–607 lie on the Extracellular side of the membrane; that stretch reads SWVWNQFFVL…AYILPAGLST (560 aa). Cadherin domains follow at residues 49 to 153, 154 to 262, 263 to 377, 378 to 482, and 482 to 599; these read WVWN…EPKF, LDGP…PPRF, PRRS…PPVF, TSRL…APEF, and FAME…AEAY. N-linked (GlcNAc...) asparagine glycans are attached at residues Asn-449 and Asn-530. A helical transmembrane segment spans residues 608–628; it reads GALIAILACVLTLLVLVLLIV. The Cytoplasmic portion of the chain corresponds to 629–785; sequence TMRRRKKEPL…YGSGPDCLYS (157 aa).

It is found in the cell membrane. In terms of biological role, cadherins are calcium-dependent cell adhesion proteins. They preferentially interact with themselves in a homophilic manner in connecting cells; cadherins may thus contribute to the sorting of heterogeneous cell types. In Gallus gallus (Chicken), this protein is Cadherin-7 (CDH7).